We begin with the raw amino-acid sequence, 260 residues long: Probable 6-oxopurine nucleoside phosphorylase (260 aa).

Phosphate is bound by residues Ser-9 and Arg-49–His-50. Met-182 lines the substrate pocket. Thr-183 is a phosphate binding site. Asn-206–Ala-208 serves as a coordination point for substrate.

Belongs to the PNP/MTAP phosphorylase family. MTAP subfamily. Homohexamer. Dimer of a homotrimer.

It carries out the reaction a purine D-ribonucleoside + phosphate = a purine nucleobase + alpha-D-ribose 1-phosphate. It functions in the pathway purine metabolism; purine nucleoside salvage. In terms of biological role, purine nucleoside phosphorylase which is highly specific for 6-oxopurine nucleosides. Cleaves guanosine or inosine to respective bases and sugar-1-phosphate molecules. Involved in purine salvage. The polypeptide is Probable 6-oxopurine nucleoside phosphorylase (Moorella thermoacetica (strain ATCC 39073 / JCM 9320)).